Reading from the N-terminus, the 77-residue chain is MRSLIIVLLFPSIIYSMSIRRCEKTEEETWGLKIGLCIIAKDFYPERTDCSVHLPTASEGLITEGNGFRDIRNTDKL.

The first 17 residues, Met1 to Met17, serve as a signal peptide directing secretion.

Belongs to the chordopoxvirinae B9 protein family.

In Homo sapiens (Human), this protein is Protein OPG195 (OPG197).